Reading from the N-terminus, the 290-residue chain is Translin-associated protein X (290 aa).

Residues 1–31 (MNGKEGPGGFRKRKHDTFPHNQRREGKDASL) are disordered. Positions 16-28 (DTFPHNQRREGKD) are enriched in basic and acidic residues. Residues 73 to 208 (LLHRITSAPD…MRMCINSVGN (136 aa)) form an interaction with C1D region. Glu-129 and Glu-197 together coordinate Mg(2+). Residue Lys-279 forms a Glycyl lysine isopeptide (Lys-Gly) (interchain with G-Cter in SUMO2) linkage.

It belongs to the translin family. Ring-shaped heterooctamer of six TSN and two TSNAX subunits. Interacts with GOLGA3, TSNAXIP1, SUN1 and AKAP9. Interacts with the homodimeric form of C1D following gamma-radiation. Interacts with TSN and C1D in a mutually exclusive manner. Sumoylated with SUMO1. As to expression, detected in heart, brain, lung, liver, kidney and testis.

Its subcellular location is the cytoplasm. It localises to the perinuclear region. It is found in the golgi apparatus. The protein resides in the nucleus. Its function is as follows. Acts in combination with TSN as an endonuclease involved in the activation of the RNA-induced silencing complex (RISC). Possible role in spermatogenesis. The polypeptide is Translin-associated protein X (Tsnax) (Mus musculus (Mouse)).